The primary structure comprises 680 residues: PAN2-PAN3 deadenylation complex subunit PAN3 (680 aa).

3 disordered regions span residues 1–26 (MATTRYNSNDFRRQLGSPRPKGRADT), 51–87 (HDQTKKSPKPDATTRKTLNVDSAPFTPAVSSQPSKKT), and 99–120 (FTPRATAATPTGTPTAQETDIP). A C3H1-type zinc finger spans residues 25–54 (DTKDTLCRNILIYGHCRYEDAGCAFNHDQT). Positions 52–64 (DQTKKSPKPDATT) are enriched in basic and acidic residues. A PABPC-interacting motif-2 (PAM-2) motif is present at residues 62–82 (ATTRKTLNVDSAPFTPAVSSQ). The segment covering 99–117 (FTPRATAATPTGTPTAQET) has biased composition (low complexity). Positions 256 to 522 (QTMTGTAALQ…TVKNLVAGIN (267 aa)) are pseudokinase domain. ATP contacts are provided by residues Arg311, 360 to 367 (EYYPLAET), and 422 to 423 (TK). Residues 523-561 (EHVMTAFDAQQRQSDMLYSELYREVENGRVLRLLMKLAT) adopt a coiled-coil conformation. Residues 562–680 (INERTEYDKD…VHHPSHRDRF (119 aa)) form a knob domain region. Positions 655–669 (SGNGRGGPVASGSGH) are enriched in gly residues. Residues 655–680 (SGNGRGGPVASGSGHGVHHPSHRDRF) are disordered. Basic residues predominate over residues 670 to 680 (GVHHPSHRDRF).

This sequence belongs to the protein kinase superfamily. PAN3 family. Homodimer. Forms a heterotrimer with a catalytic subunit PAN2 to form the poly(A)-nuclease (PAN) deadenylation complex. Interacts (via PAM-2 motif) with poly(A)-binding protein PAB1 (via PABC domain), conferring substrate specificity of the enzyme complex.

It is found in the cytoplasm. In terms of biological role, regulatory subunit of the poly(A)-nuclease (PAN) deadenylation complex, one of two cytoplasmic mRNA deadenylases involved in mRNA turnover. PAN specifically shortens poly(A) tails of RNA and the activity is stimulated by poly(A)-binding protein PAB1. PAN deadenylation is followed by rapid degradation of the shortened mRNA tails by the CCR4-NOT complex. Deadenylated mRNAs are then degraded by two alternative mechanisms, namely exosome-mediated 3'-5' exonucleolytic degradation, or deadenylation-dependent mRNA decaping and subsequent 5'-3' exonucleolytic degradation by XRN1. May also be involved in post-transcriptional maturation of mRNA poly(A) tails. PAN3 acts as a positive regulator for PAN activity, recruiting the catalytic subunit PAN2 to mRNA via its interaction with RNA and with PAB1. This Pyricularia oryzae (strain 70-15 / ATCC MYA-4617 / FGSC 8958) (Rice blast fungus) protein is PAN2-PAN3 deadenylation complex subunit PAN3.